Consider the following 268-residue polypeptide: Indole-3-glycerol phosphate synthase (268 aa).

Belongs to the TrpC family.

It catalyses the reaction 1-(2-carboxyphenylamino)-1-deoxy-D-ribulose 5-phosphate + H(+) = (1S,2R)-1-C-(indol-3-yl)glycerol 3-phosphate + CO2 + H2O. The protein operates within amino-acid biosynthesis; L-tryptophan biosynthesis; L-tryptophan from chorismate: step 4/5. The chain is Indole-3-glycerol phosphate synthase from Acinetobacter baumannii (strain AB0057).